The sequence spans 212 residues: FMN-dependent NADH:quinone oxidoreductase 1 (212 aa).

FMN contacts are provided by residues Ser10, 16 to 18 (SHS), 97 to 100 (MYNF), and 145 to 148 (SRGG).

This sequence belongs to the azoreductase type 1 family. Homodimer. It depends on FMN as a cofactor.

The enzyme catalyses 2 a quinone + NADH + H(+) = 2 a 1,4-benzosemiquinone + NAD(+). It carries out the reaction N,N-dimethyl-1,4-phenylenediamine + anthranilate + 2 NAD(+) = 2-(4-dimethylaminophenyl)diazenylbenzoate + 2 NADH + 2 H(+). Functionally, quinone reductase that provides resistance to thiol-specific stress caused by electrophilic quinones. Its function is as follows. Also exhibits azoreductase activity. Catalyzes the reductive cleavage of the azo bond in aromatic azo compounds to the corresponding amines. This chain is FMN-dependent NADH:quinone oxidoreductase 1, found in Pseudomonas fluorescens (strain Pf0-1).